Reading from the N-terminus, the 49-residue chain is uncharacterized protein (49 aa).

Residues 5–27 (ILEILSAFIRILFKLLYCWALFF) form a helical membrane-spanning segment.

Its subcellular location is the membrane. This is an uncharacterized protein from Saccharomyces cerevisiae (strain ATCC 204508 / S288c) (Baker's yeast).